A 297-amino-acid polypeptide reads, in one-letter code: Acetylglutamate kinase (297 aa).

Substrate contacts are provided by residues 64–65 (GG), Arg-86, and Asn-190.

The protein belongs to the acetylglutamate kinase family. ArgB subfamily.

It is found in the cytoplasm. It carries out the reaction N-acetyl-L-glutamate + ATP = N-acetyl-L-glutamyl 5-phosphate + ADP. The protein operates within amino-acid biosynthesis; L-arginine biosynthesis; N(2)-acetyl-L-ornithine from L-glutamate: step 2/4. Catalyzes the ATP-dependent phosphorylation of N-acetyl-L-glutamate. This chain is Acetylglutamate kinase, found in Solidesulfovibrio magneticus (strain ATCC 700980 / DSM 13731 / RS-1) (Desulfovibrio magneticus).